A 255-amino-acid chain; its full sequence is MPLEIVTVPCLSDNYAYLIHDADAGKTALVDAPEAAPIQSELDRRGWSLDQVWLTHHHWDHVDGLAALRDRYKPTVIGAEADAHRLPPLDLAVSEGDRFDLGGAPVEVLDVSGHTVGHIAFHLPTGKAVFTADSLMALGCGRLFEGTPDQMWASLSKLAALPDDTLVCSGHEYTQSNARFALSVDPDNAALKTRAAEIDQARAEGRPTVPSLLSLEKSTNPFLRAADPGIQSLLGMQGADPARVFAEIRARKDHF.

Residues His56, His58, Asp60, His61, His114, Asp133, and His171 each contribute to the Zn(2+) site.

This sequence belongs to the metallo-beta-lactamase superfamily. Glyoxalase II family. Monomer. Zn(2+) is required as a cofactor.

The enzyme catalyses an S-(2-hydroxyacyl)glutathione + H2O = a 2-hydroxy carboxylate + glutathione + H(+). It participates in secondary metabolite metabolism; methylglyoxal degradation; (R)-lactate from methylglyoxal: step 2/2. Functionally, thiolesterase that catalyzes the hydrolysis of S-D-lactoyl-glutathione to form glutathione and D-lactic acid. The polypeptide is Hydroxyacylglutathione hydrolase (Ruegeria pomeroyi (strain ATCC 700808 / DSM 15171 / DSS-3) (Silicibacter pomeroyi)).